The primary structure comprises 127 residues: Fluoride-specific ion channel FluC (127 aa).

4 helical membrane passes run methionine 1–valine 21, glutamate 32–valine 52, threonine 71–tyrosine 91, and valine 96–leucine 116. Residues glycine 75 and threonine 78 each contribute to the Na(+) site.

Belongs to the fluoride channel Fluc/FEX (TC 1.A.43) family.

The protein localises to the cell inner membrane. It catalyses the reaction fluoride(in) = fluoride(out). Na(+) is not transported, but it plays an essential structural role and its presence is essential for fluoride channel function. In terms of biological role, fluoride-specific ion channel. Important for reducing fluoride concentration in the cell, thus reducing its toxicity. The sequence is that of Fluoride-specific ion channel FluC from Granulibacter bethesdensis (strain ATCC BAA-1260 / CGDNIH1).